Consider the following 131-residue polypeptide: Conotoxin Cal8.2 (131 aa).

The signal sequence occupies residues Met-1 to Ala-19. Residues Asp-20–Arg-38 constitute a propeptide that is removed on maturation.

Post-translationally, contains 4 disulfide bonds. As to expression, expressed by the venom duct.

The protein resides in the secreted. Probable neurotoxin with unknown target. Possibly targets ion channels. The sequence is that of Conotoxin Cal8.2 from Californiconus californicus (California cone).